The sequence spans 500 residues: Maturase K (500 aa).

It belongs to the intron maturase 2 family. MatK subfamily.

The protein resides in the plastid. It localises to the chloroplast. Usually encoded in the trnK tRNA gene intron. Probably assists in splicing its own and other chloroplast group II introns. This Brasenia schreberi (Water shield) protein is Maturase K.